A 91-amino-acid polypeptide reads, in one-letter code: Large ribosomal subunit protein eL37 (91 aa).

Zn(2+) contacts are provided by C19, C22, C34, and C37. The segment at 19–37 (CKRCGKSSFHIQKKRCASC) adopts a C4-type zinc-finger fold.

It belongs to the eukaryotic ribosomal protein eL37 family. The cofactor is Zn(2+).

Binds to the 23S rRNA. The sequence is that of Large ribosomal subunit protein eL37 from Caenorhabditis elegans.